Here is a 122-residue protein sequence, read N- to C-terminus: Bet1-like SNARE 1-1 (122 aa).

Topologically, residues 1–103 (MNPRREPRGG…VFETKSSRRM (103 aa)) are cytoplasmic. Positions 32-94 (EINEHENERA…SGTMDRFKTV (63 aa)) constitute a t-SNARE coiled-coil homology domain. Residue Ser56 is modified to Phosphoserine. Residues 104 to 121 (LTLVASFVGLFLVIYYLT) traverse the membrane as a helical; Anchor for type IV membrane protein segment. A topological domain (vesicular) is located at residue Arg122.

This sequence belongs to the BET1 family.

It is found in the golgi apparatus membrane. The protein resides in the endoplasmic reticulum membrane. In terms of biological role, required for vesicular transport from the ER to the Golgi complex. Functions as a SNARE associated with ER-derived vesicles. The polypeptide is Bet1-like SNARE 1-1 (BET11) (Arabidopsis thaliana (Mouse-ear cress)).